Reading from the N-terminus, the 537-residue chain is Tegument protein BRRF2 (537 aa).

Disordered regions lie at residues 322–466 (PRFL…AEEF) and 486–537 (GLRV…LSVV). Residues 334-347 (EPQQTCSQLTSRGN) are compositionally biased toward polar residues. The span at 420 to 441 (VTGSSQAAPSSSSVTPVASLSG) shows a compositional bias: low complexity. The span at 492-517 (DEDEDGSEDGEFSDLDLSDSDHEGDE) shows a compositional bias: acidic residues.

It belongs to the lymphocryptovirus BRRF2 family.

Its subcellular location is the virion tegument. This Homo sapiens (Human) protein is Tegument protein BRRF2.